The sequence spans 369 residues: Bi-functional coumaroyl CoA and feruloyl CoA ortho-hydroxylase Diox1 (369 aa).

A Fe2OG dioxygenase domain is found at 209–319; sequence IREPMLVGSR…RISVPLFVNP (111 aa). Y225 provides a ligand contact to 2-oxoglutarate. Residues H240, D242, and H300 each contribute to the Fe cation site. 2 residues coordinate 2-oxoglutarate: R310 and S312.

The protein belongs to the iron/ascorbate-dependent oxidoreductase family. It depends on L-ascorbate as a cofactor. Fe(2+) serves as cofactor.

The enzyme catalyses (E)-4-coumaroyl-CoA + 2-oxoglutarate + O2 = (E)-2,4-dihydroxycinnamoyl-CoA + succinate + CO2. It carries out the reaction (E)-feruloyl-CoA + 2-oxoglutarate + O2 = (E)-6-hydroxyferuloyl-CoA + succinate + CO2. Its pathway is phenylpropanoid metabolism. Functionally, 2-oxoglutarate (OG)- and Fe(II)-dependent dioxygenase (2OGD) involved in scopoletin and umbelliferone biosynthesis. Converts feruloyl CoA into 6'-hydroxyferuloyl CoA, and p-coumaroyl CoA into 2,4-dihydroxycinnamoyl-CoA. The sequence is that of Bi-functional coumaroyl CoA and feruloyl CoA ortho-hydroxylase Diox1 from Ruta graveolens (Common rue).